A 341-amino-acid chain; its full sequence is UDP-N-acetyl-alpha-D-glucosaminouronate 4-epimerase (341 aa).

The NAD(+) site is built by F27, I28, D47, A50, T51, G52, D78, I79, and Q98. S103 is a binding site for UDP-N-acetyl-alpha-D-galactosamine. T117 is a binding site for NAD(+). The UDP-N-acetyl-alpha-D-galactosamine site is built by S142, S143, and Y166. Residues Y166 and K170 each coordinate NAD(+). The active-site Proton acceptor is Y166. N195 is a binding site for UDP-N-acetyl-alpha-D-galactosamine. V196 contributes to the NAD(+) binding site. V210, Y225, N227, R234, R299, and D302 together coordinate UDP-N-acetyl-alpha-D-galactosamine.

Belongs to the NAD(P)-dependent epimerase/dehydratase family. In terms of assembly, homodimer. The cofactor is NAD(+).

The catalysed reaction is UDP-2-acetamido-2-deoxy-alpha-D-glucuronate = UDP-2-acetamido-2-deoxy-alpha-D-galacturonate. It carries out the reaction UDP-N-acetyl-alpha-D-glucosamine = UDP-N-acetyl-alpha-D-galactosamine. Its pathway is bacterial outer membrane biogenesis; LPS O-antigen biosynthesis. Functionally, epimerase required for the biosynthesis of the B-band O antigen of serotype O6 lipopolysaccharide. Catalyzes the reversible epimerization of UDP-N-acetylglucosaminuronic acid (UDP-GlcNAcA) to UDP-N-acetylgalactosaminuronic acid (UDP-GalNAcA). Also catalyzes the reversible epimerization of UDP-N-acetylglucosamine (UDP-GlcNAc) to UDP-N-acetylgalactosamine (UDP-GalNAc). Has very low epimerase activity with UDP-glucose (UDP-Glc) and UDP-galactose (UDP-Gal). This chain is UDP-N-acetyl-alpha-D-glucosaminouronate 4-epimerase, found in Pseudomonas aeruginosa.